We begin with the raw amino-acid sequence, 243 residues long: Cell division protein ZipA (243 aa).

The Periplasmic portion of the chain corresponds to 1–4 (MSDM). Residues 5 to 25 (AMIRIGILIAGLLLVAAIFLF) form a helical membrane-spanning segment. Residues 26-243 (GRPKKSPQGR…APPLTKSPRW (218 aa)) lie on the Cytoplasmic side of the membrane. The tract at residues 30 to 89 (KSPQGRRVDKGEGQPRERREPVISSEFGAEGDAAERAEGVEQSELNLEGQDASGGNEVGK) is disordered. The span at 35-50 (RRVDKGEGQPRERREP) shows a compositional bias: basic and acidic residues.

It belongs to the ZipA family. As to quaternary structure, interacts with FtsZ via their C-terminal domains.

The protein resides in the cell inner membrane. Essential cell division protein that stabilizes the FtsZ protofilaments by cross-linking them and that serves as a cytoplasmic membrane anchor for the Z ring. Also required for the recruitment to the septal ring of downstream cell division proteins. The protein is Cell division protein ZipA of Xanthomonas axonopodis pv. citri (strain 306).